The chain runs to 103 residues: MGKLTLLLLAILVWLQYSLWFGKNGIHDYTRVNNDVAAQQATNAKLKARNDQLFAEIDDLNGGQEALEERARNELSMTRPGETFYRLVPDASKRAQSAGQNNR.

Over 1–3 (MGK) the chain is Cytoplasmic. A helical membrane pass occupies residues 4–21 (LTLLLLAILVWLQYSLWF). Residues 22–103 (GKNGIHDYTR…RAQSAGQNNR (82 aa)) are Periplasmic-facing. The stretch at 31–71 (RVNNDVAAQQATNAKLKARNDQLFAEIDDLNGGQEALEERA) forms a coiled coil.

This sequence belongs to the FtsB family. As to quaternary structure, part of a complex composed of FtsB, FtsL and FtsQ.

The protein localises to the cell inner membrane. Essential cell division protein. May link together the upstream cell division proteins, which are predominantly cytoplasmic, with the downstream cell division proteins, which are predominantly periplasmic. The chain is Cell division protein FtsB from Escherichia coli O81 (strain ED1a).